Reading from the N-terminus, the 365-residue chain is tRNA-specific 2-thiouridylase MnmA (365 aa).

ATP contacts are provided by residues 14 to 21 (AMSGGVDS) and Leu40. Cys108 acts as the Nucleophile in catalysis. Cys108 and Cys204 are oxidised to a cystine. An ATP-binding site is contributed by Gly132. The segment at 154 to 156 (KDQ) is interaction with tRNA. Cys204 serves as the catalytic Cysteine persulfide intermediate.

Belongs to the MnmA/TRMU family.

It localises to the cytoplasm. The enzyme catalyses S-sulfanyl-L-cysteinyl-[protein] + uridine(34) in tRNA + AH2 + ATP = 2-thiouridine(34) in tRNA + L-cysteinyl-[protein] + A + AMP + diphosphate + H(+). Functionally, catalyzes the 2-thiolation of uridine at the wobble position (U34) of tRNA, leading to the formation of s(2)U34. The sequence is that of tRNA-specific 2-thiouridylase MnmA from Rickettsia rickettsii (strain Iowa).